The sequence spans 620 residues: Probable potassium transport system protein Kup (620 aa).

The next 12 membrane-spanning stretches (helical) occupy residues 11 to 31 (LAFLAMGIVYGDIGTSPLYAF), 51 to 71 (ILSLVFWAFVLIVSIKYLLLV), 100 to 120 (IAMLLGILATGFFFGEAVITP), 138 to 158 (LAPYVLPIAMMIIVALFAVQA), 167 to 187 (FFAPVMLLWFLVLALLGAHAI), 202 to 222 (AVHFVLLYGQHTLFILGLVVL), 246 to 266 (WFALVMPSLLLNYFGQGAYLL), 288 to 308 (LILLATFATVIASQAVISGIF), 334 to 354 (GQIYVPAANMLLFVAVIFVML), 364 to 384 (AAYGIAVTAIMMISSLLLVLV), 396 to 416 (VVTIGIVFIGMDSLLLASTST), and 418 to 438 (LMEGGWLPLLLGCVVFIVMYI).

It belongs to the HAK/KUP transporter (TC 2.A.72) family.

The protein localises to the cell inner membrane. It catalyses the reaction K(+)(in) + H(+)(in) = K(+)(out) + H(+)(out). In terms of biological role, transport of potassium into the cell. Likely operates as a K(+):H(+) symporter. This chain is Probable potassium transport system protein Kup, found in Vibrio cholerae serotype O1 (strain ATCC 39315 / El Tor Inaba N16961).